We begin with the raw amino-acid sequence, 210 residues long: ATP-dependent Clp protease proteolytic subunit (210 aa).

The active-site Nucleophile is Ser106. His131 is a catalytic residue.

The protein belongs to the peptidase S14 family. Fourteen ClpP subunits assemble into 2 heptameric rings which stack back to back to give a disk-like structure with a central cavity, resembling the structure of eukaryotic proteasomes.

It is found in the cytoplasm. The catalysed reaction is Hydrolysis of proteins to small peptides in the presence of ATP and magnesium. alpha-casein is the usual test substrate. In the absence of ATP, only oligopeptides shorter than five residues are hydrolyzed (such as succinyl-Leu-Tyr-|-NHMec, and Leu-Tyr-Leu-|-Tyr-Trp, in which cleavage of the -Tyr-|-Leu- and -Tyr-|-Trp bonds also occurs).. Cleaves peptides in various proteins in a process that requires ATP hydrolysis. Has a chymotrypsin-like activity. Plays a major role in the degradation of misfolded proteins. In Afipia carboxidovorans (strain ATCC 49405 / DSM 1227 / KCTC 32145 / OM5) (Oligotropha carboxidovorans), this protein is ATP-dependent Clp protease proteolytic subunit.